We begin with the raw amino-acid sequence, 89 residues long: MPAPRYKSGSSKKVYRKAPGNSSIVHYRRKKQSKAVCGACGALLNGVPRGRAVEITKLAKTEKRPERPFGGNLCPKCVKKMMVAKARNF.

The tract at residues methionine 1–serine 22 is disordered.

Belongs to the eukaryotic ribosomal protein eL34 family.

This chain is Large ribosomal subunit protein eL34, found in Methanococcus maripaludis (strain DSM 14266 / JCM 13030 / NBRC 101832 / S2 / LL).